A 382-amino-acid polypeptide reads, in one-letter code: D-alanine--D-alanine ligase (382 aa).

The ATP-grasp domain maps to 161-372 (KVVFEAAGLQ…YAELIDELIY (212 aa)). An ATP-binding site is contributed by 193–248 (VDRLGYPVFVKPARAGSSMGISKVDSLEGLDAAIAAAREHDLKLVIEAGIVGREIE). Mg(2+) is bound by residues Asp326, Glu339, and Asn341.

This sequence belongs to the D-alanine--D-alanine ligase family. Mg(2+) serves as cofactor. The cofactor is Mn(2+).

The protein localises to the cytoplasm. The enzyme catalyses 2 D-alanine + ATP = D-alanyl-D-alanine + ADP + phosphate + H(+). It participates in cell wall biogenesis; peptidoglycan biosynthesis. In terms of biological role, cell wall formation. The polypeptide is D-alanine--D-alanine ligase (Arthrobacter sp. (strain FB24)).